The primary structure comprises 181 residues: Glucose-1-phosphate adenylyltransferase large subunit 2 (181 aa).

This sequence belongs to the bacterial/plant glucose-1-phosphate adenylyltransferase family. In terms of assembly, heterotetramer. Leaves.

The protein resides in the plastid. The protein localises to the chloroplast. It localises to the amyloplast. The catalysed reaction is alpha-D-glucose 1-phosphate + ATP + H(+) = ADP-alpha-D-glucose + diphosphate. It participates in glycan biosynthesis; starch biosynthesis. Highly active without 3'phosphoglycerate, and is only slightly affected by the activator 3'phosphoglycerate and inhibitor orthophosphate. In terms of biological role, this protein plays a role in synthesis of starch. It catalyzes the synthesis of the activated glycosyl donor, ADP-glucose from Glc-1-P and ATP. This is Glucose-1-phosphate adenylyltransferase large subunit 2 from Hordeum vulgare (Barley).